Consider the following 168-residue polypeptide: Photosystem I assembly protein Ycf3 (168 aa).

TPR repeat units lie at residues 35 to 68 (AFTYYRDGMSAQSEGNYAEALQNYYEAMRLEIDP), 72 to 105 (SYILYNIGLIHTSNGEHTKALEYYFRALERNPFL), and 120 to 153 (GEQAIQQGDSEIAEAWFDQAAEYWKQAIALTPGN).

It belongs to the Ycf3 family.

It is found in the plastid. Its subcellular location is the chloroplast thylakoid membrane. In terms of biological role, essential for the assembly of the photosystem I (PSI) complex. May act as a chaperone-like factor to guide the assembly of the PSI subunits. The sequence is that of Photosystem I assembly protein Ycf3 from Atropa belladonna (Belladonna).